The chain runs to 618 residues: Proline--tRNA ligase (618 aa).

The protein belongs to the class-II aminoacyl-tRNA synthetase family. ProS type 1 subfamily. In terms of assembly, homodimer.

It is found in the cytoplasm. It carries out the reaction tRNA(Pro) + L-proline + ATP = L-prolyl-tRNA(Pro) + AMP + diphosphate. Catalyzes the attachment of proline to tRNA(Pro) in a two-step reaction: proline is first activated by ATP to form Pro-AMP and then transferred to the acceptor end of tRNA(Pro). As ProRS can inadvertently accommodate and process non-cognate amino acids such as alanine and cysteine, to avoid such errors it has two additional distinct editing activities against alanine. One activity is designated as 'pretransfer' editing and involves the tRNA(Pro)-independent hydrolysis of activated Ala-AMP. The other activity is designated 'posttransfer' editing and involves deacylation of mischarged Ala-tRNA(Pro). The misacylated Cys-tRNA(Pro) is not edited by ProRS. The polypeptide is Proline--tRNA ligase (Streptococcus pyogenes serotype M2 (strain MGAS10270)).